We begin with the raw amino-acid sequence, 264 residues long: Thymidylate synthase (264 aa).

Arg-21 is a binding site for dUMP. Residue His-51 coordinates (6R)-5,10-methylene-5,6,7,8-tetrahydrofolate. DUMP is bound at residue 126–127 (RR). Cys-146 functions as the Nucleophile in the catalytic mechanism. Residues 166–169 (RSAD), Asn-177, and 207–209 (HLY) each bind dUMP. Asp-169 serves as a coordination point for (6R)-5,10-methylene-5,6,7,8-tetrahydrofolate. Position 263 (Ala-263) interacts with (6R)-5,10-methylene-5,6,7,8-tetrahydrofolate.

This sequence belongs to the thymidylate synthase family. Bacterial-type ThyA subfamily. In terms of assembly, homodimer.

Its subcellular location is the cytoplasm. It carries out the reaction dUMP + (6R)-5,10-methylene-5,6,7,8-tetrahydrofolate = 7,8-dihydrofolate + dTMP. Its pathway is pyrimidine metabolism; dTTP biosynthesis. Its function is as follows. Catalyzes the reductive methylation of 2'-deoxyuridine-5'-monophosphate (dUMP) to 2'-deoxythymidine-5'-monophosphate (dTMP) while utilizing 5,10-methylenetetrahydrofolate (mTHF) as the methyl donor and reductant in the reaction, yielding dihydrofolate (DHF) as a by-product. This enzymatic reaction provides an intracellular de novo source of dTMP, an essential precursor for DNA biosynthesis. The polypeptide is Thymidylate synthase (Rhizobium johnstonii (strain DSM 114642 / LMG 32736 / 3841) (Rhizobium leguminosarum bv. viciae)).